A 907-amino-acid polypeptide reads, in one-letter code: Aldehyde oxidoreductase (907 aa).

Residues 2-79 (IQKVITVNGI…GAQITTIEGV (78 aa)) enclose the 2Fe-2S ferredoxin-type domain. [2Fe-2S] cluster is bound by residues Cys-40, Cys-45, Cys-48, Cys-60, Cys-100, Cys-103, Cys-137, and Cys-139. Mo-molybdopterin cytosine dinucleotide-binding residues include His-653 and Glu-869.

It belongs to the xanthine dehydrogenase family. Homodimer. Mo-molybdopterin cytosine dinucleotide is required as a cofactor. [2Fe-2S] cluster serves as cofactor.

The catalysed reaction is an aldehyde + A + H2O = a carboxylate + AH2 + H(+). This chain is Aldehyde oxidoreductase (mop), found in Megalodesulfovibrio gigas (Desulfovibrio gigas).